A 430-amino-acid chain; its full sequence is Bifunctional protein GlmU (430 aa).

Residues 1 to 223 (MSFSVVILAA…KNEFQGVNSK (223 aa)) form a pyrophosphorylase region. Residues 8–11 (LAAG), Lys22, and 81–82 (GT) contribute to the UDP-N-acetyl-alpha-D-glucosamine site. Residue Asp102 coordinates Mg(2+). Gly135, Glu149, Asn164, and Asn221 together coordinate UDP-N-acetyl-alpha-D-glucosamine. Asn221 contacts Mg(2+). The interval 224–244 (YDLANAEIVMQDRIKRHWMQQ) is linker. Residues 245 to 430 (GVIMRLPQTI…DFYYKFFGKN (186 aa)) are N-acetyltransferase. Positions 308 and 325 each coordinate UDP-N-acetyl-alpha-D-glucosamine. His336 (proton acceptor) is an active-site residue. UDP-N-acetyl-alpha-D-glucosamine is bound by residues Tyr339 and Asn350. Residues Ala353, 359 to 360 (NY), Ser378, Ala396, and Arg413 contribute to the acetyl-CoA site.

The protein in the N-terminal section; belongs to the N-acetylglucosamine-1-phosphate uridyltransferase family. This sequence in the C-terminal section; belongs to the transferase hexapeptide repeat family. Homotrimer. Mg(2+) is required as a cofactor.

It is found in the cytoplasm. The catalysed reaction is alpha-D-glucosamine 1-phosphate + acetyl-CoA = N-acetyl-alpha-D-glucosamine 1-phosphate + CoA + H(+). It catalyses the reaction N-acetyl-alpha-D-glucosamine 1-phosphate + UTP + H(+) = UDP-N-acetyl-alpha-D-glucosamine + diphosphate. It functions in the pathway nucleotide-sugar biosynthesis; UDP-N-acetyl-alpha-D-glucosamine biosynthesis; N-acetyl-alpha-D-glucosamine 1-phosphate from alpha-D-glucosamine 6-phosphate (route II): step 2/2. The protein operates within nucleotide-sugar biosynthesis; UDP-N-acetyl-alpha-D-glucosamine biosynthesis; UDP-N-acetyl-alpha-D-glucosamine from N-acetyl-alpha-D-glucosamine 1-phosphate: step 1/1. Its pathway is bacterial outer membrane biogenesis; LPS lipid A biosynthesis. Catalyzes the last two sequential reactions in the de novo biosynthetic pathway for UDP-N-acetylglucosamine (UDP-GlcNAc). The C-terminal domain catalyzes the transfer of acetyl group from acetyl coenzyme A to glucosamine-1-phosphate (GlcN-1-P) to produce N-acetylglucosamine-1-phosphate (GlcNAc-1-P), which is converted into UDP-GlcNAc by the transfer of uridine 5-monophosphate (from uridine 5-triphosphate), a reaction catalyzed by the N-terminal domain. This is Bifunctional protein GlmU from Nitratiruptor sp. (strain SB155-2).